Here is a 164-residue protein sequence, read N- to C-terminus: UPF0114 protein YqhA (164 aa).

The next 3 helical transmembrane spans lie at 15–35 (LLAPVYFGLSLALIALALKFF), 53–73 (LILVLLSLVDMTLVGGLLVMV), and 136–156 (LMWYVIIHLTFVLSAFVMGYL).

The protein belongs to the UPF0114 family.

The protein resides in the cell membrane. This chain is UPF0114 protein YqhA, found in Salmonella dublin (strain CT_02021853).